Reading from the N-terminus, the 342-residue chain is Ribosomal RNA small subunit methyltransferase C (342 aa).

Belongs to the methyltransferase superfamily. RsmC family. As to quaternary structure, monomer.

The protein resides in the cytoplasm. It carries out the reaction guanosine(1207) in 16S rRNA + S-adenosyl-L-methionine = N(2)-methylguanosine(1207) in 16S rRNA + S-adenosyl-L-homocysteine + H(+). Functionally, specifically methylates the guanine in position 1207 of 16S rRNA in the 30S particle. This is Ribosomal RNA small subunit methyltransferase C from Salmonella typhi.